The primary structure comprises 611 residues: tRNA uridine 5-carboxymethylaminomethyl modification enzyme MnmG (611 aa).

12–17 (GGGHSG) contacts FAD. Residue 271 to 285 (GPRYCPSIEEKVYRF) participates in NAD(+) binding.

Belongs to the MnmG family. As to quaternary structure, homodimer. Heterotetramer of two MnmE and two MnmG subunits. The cofactor is FAD.

Its subcellular location is the cytoplasm. NAD-binding protein involved in the addition of a carboxymethylaminomethyl (cmnm) group at the wobble position (U34) of certain tRNAs, forming tRNA-cmnm(5)s(2)U34. This chain is tRNA uridine 5-carboxymethylaminomethyl modification enzyme MnmG, found in Karelsulcia muelleri (strain GWSS) (Sulcia muelleri).